The sequence spans 906 residues: Putative disease resistance protein At1g59780 (906 aa).

The stretch at 20–59 forms a coiled coil; that stretch reads KLLSQEYERFQGVEEQITELRDDLKMLMAFLSDADAKKQT. Residues 138–452 enclose the NB-ARC domain; it reads SHAQLERKRE…AEGITYPGNY (315 aa). ATP is bound at residue 187-194; it reads GLGGLGKT. LRR repeat units lie at residues 572 to 597, 599 to 619, 620 to 644, and 825 to 850; these read LPLLRVLDLDGAKFKGGKLPSSIGKL, HLKYLSLYQASVTYLPSSLRN, LKSLLYLNLRINSGQLINVPNVFKE, and MPLLHTLHIVDCKKLKEIPDGLRFIS.

The protein belongs to the disease resistance NB-LRR family.

Its function is as follows. Potential disease resistance protein. The protein is Putative disease resistance protein At1g59780 of Arabidopsis thaliana (Mouse-ear cress).